A 432-amino-acid chain; its full sequence is Glutamate-1-semialdehyde 2,1-aminomutase (432 aa).

Lys272 is modified (N6-(pyridoxal phosphate)lysine).

The protein belongs to the class-III pyridoxal-phosphate-dependent aminotransferase family. HemL subfamily. As to quaternary structure, homodimer. Pyridoxal 5'-phosphate serves as cofactor.

It is found in the cytoplasm. It carries out the reaction (S)-4-amino-5-oxopentanoate = 5-aminolevulinate. Its pathway is porphyrin-containing compound metabolism; protoporphyrin-IX biosynthesis; 5-aminolevulinate from L-glutamyl-tRNA(Glu): step 2/2. The protein operates within porphyrin-containing compound metabolism; chlorophyll biosynthesis. The polypeptide is Glutamate-1-semialdehyde 2,1-aminomutase (Picosynechococcus sp. (strain ATCC 27264 / PCC 7002 / PR-6) (Agmenellum quadruplicatum)).